Consider the following 395-residue polypeptide: Polar tube protein 1 (395 aa).

The N-terminal stretch at 1-22 (MKGISKILSASIALMKLENVYS) is a signal peptide. Disordered stretches follow at residues 59-95 (CASG…APAE) and 111-133 (PGTT…QQPL). The segment covering 68 to 80 (SPSPAAPTSPVTP) has biased composition (low complexity). Polar residues predominate over residues 81 to 91 (GKTSENETSPS). N-linked (GlcNAc...) asparagine glycosylation is present at N86. The segment covering 111 to 128 (PGTTSGTTPGSGPCETPE) has biased composition (low complexity). A glycan (N-linked (GlcNAc...) asparagine) is linked at N173. 4 repeat units span residues 179 to 204 (PGQQ…MPST), 205 to 230 (PGQQ…TPST), 231 to 256 (PGQQ…TPST), and 257 to 282 (PGQQ…MPGT). Residues 179–282 (PGQQQILSGT…LCQDQGMPGT (104 aa)) form a 4 X 26 AA approximate tandem repeats region. The segment at 277-300 (QGMPGTSGVPGQQGQSSGQCCAPQ) is disordered. Residues 280 to 300 (PGTSGVPGQQGQSSGQCCAPQ) are compositionally biased toward low complexity. A glycan (N-linked (GlcNAc...) asparagine) is linked at N311.

As to quaternary structure, interacts with PTP2 and PTP3.

The protein localises to the spore polar tube. Functionally, involved with PTP2 and PTP3 in the formation of the polar tube through which the infectious agent is passed on to the host cell. Accounts for at least 70 percent of the mass of the polar tube. The chain is Polar tube protein 1 (PTP1) from Encephalitozoon cuniculi (strain GB-M1) (Microsporidian parasite).